Consider the following 429-residue polypeptide: GDP-fucose protein O-fucosyltransferase 2 (429 aa).

Positions 1–21 are cleaved as a signal peptide; it reads MATLSFVFLLLGAVSWPPASA. Position 53–57 (53–57) interacts with GDP-beta-L-fucose; sequence PEGFN. The active-site Proton acceptor is E54. Residues C161 and C192 are joined by a disulfide bond. N-linked (GlcNAc...) asparagine glycosylation is found at N189, N209, and N259. GDP-beta-L-fucose is bound by residues 292 to 294, D371, and 388 to 389; these read HLR and TF. C412 and C419 form a disulfide bridge.

The protein belongs to the glycosyltransferase 68 family. As to expression, isoform A is expressed in fetal liver and peripheral blood lymphocytes. Isoform B is expressed in spleen, lung, testis, bone marrow, thymus, pancreas, prostate, fetal brain, fetal liver and fetal kidney. Isoform C is expressed in brain, heart, spleen, liver, lung, stomach, testis, placenta, skin, thymus, pancreas, mammary gland, prostate, fetal brain, fetal liver and fetal heart.

Its subcellular location is the endoplasmic reticulum. It is found in the golgi apparatus. It carries out the reaction L-seryl-[protein] + GDP-beta-L-fucose = 3-O-(alpha-L-fucosyl)-L-seryl-[protein] + GDP + H(+). The enzyme catalyses L-threonyl-[protein] + GDP-beta-L-fucose = 3-O-(alpha-L-fucosyl)-L-threonyl-[protein] + GDP + H(+). Its pathway is protein modification; protein glycosylation. With respect to regulation, inhibited by EDTA and by Zn(2+). Its function is as follows. Catalyzes the reaction that attaches fucose through an O-glycosidic linkage to a conserved serine or threonine residue in the consensus sequence C1-X-X-S/T-C2 of thrombospondin type I repeats (TSRs) where C1 and C2 are the first and second cysteines of the repeat, respectively. O-fucosylates members of several protein families including the ADAMTS, the thrombospondin (TSP) and spondin families. Required for the proper secretion of ADAMTS family members such as ADAMTSL1 and ADAMTS13. The O-fucosylation of TSRs is also required for restricting epithelial to mesenchymal transition (EMT), maintaining the correct patterning of mesoderm and localization of the definite endoderm. In Homo sapiens (Human), this protein is GDP-fucose protein O-fucosyltransferase 2 (POFUT2).